The primary structure comprises 151 residues: MTENLTRAFKELLNQERFGSQSEIVDALKKQGFTGINQSKISRMLSKFGAVRTRNTKMEMVYCLPNELSVPNTSSPLKNLVLDVDHNAMLIVIKTTPGAAQLIARLLDSIGKSEGILGTIAGDDTIFVTPTNNKPIDELLQNIQRLFENTL.

This sequence belongs to the ArgR family. As to quaternary structure, homohexamer.

Its subcellular location is the cytoplasm. Its pathway is amino-acid biosynthesis; L-arginine biosynthesis [regulation]. Its function is as follows. Regulates arginine biosynthesis genes. The protein is Arginine repressor (argR) of Haemophilus influenzae (strain ATCC 51907 / DSM 11121 / KW20 / Rd).